Reading from the N-terminus, the 829-residue chain is Exocyst complex component SEC10b (829 aa).

Positions 244 to 266 (RGLEVAVANLQDYCNELENRLLS) form a coiled coil.

Belongs to the SEC10 family. In terms of assembly, the exocyst complex is composed of SEC3, SEC5, SEC6, SEC8, SEC10, EXO70A1 and EXO84B. Interacts with EXO84B. Binds to EXO70E2. In terms of tissue distribution, expressed in seedlings, roots, leaves and flowers.

It is found in the cytoplasm. The protein localises to the cytosol. The protein resides in the secreted. It localises to the extracellular exosome. In terms of biological role, component of the exocyst complex involved in the docking of exocytic vesicles with fusion sites on the plasma membrane during regulated or polarized secretion. Involved in polarized cell growth and organ morphogenesis. During cytokinesis, involved in cell plate initiation, cell plate maturation and formation of new primary cell wall. This is Exocyst complex component SEC10b from Arabidopsis thaliana (Mouse-ear cress).